A 171-amino-acid chain; its full sequence is Co-chaperone protein HscB (171 aa).

The region spanning 2–74 is the J domain; the sequence is DYFTLFGLPA…LTRAEYLLSL (73 aa).

Belongs to the HscB family. As to quaternary structure, interacts with HscA and stimulates its ATPase activity. Interacts with IscU.

Its function is as follows. Co-chaperone involved in the maturation of iron-sulfur cluster-containing proteins. Seems to help targeting proteins to be folded toward HscA. This is Co-chaperone protein HscB from Salmonella agona (strain SL483).